Consider the following 173-residue polypeptide: Crossover junction endodeoxyribonuclease RuvC (173 aa).

Catalysis depends on residues D8, E67, and D139. The Mg(2+) site is built by D8, E67, and D139.

This sequence belongs to the RuvC family. As to quaternary structure, homodimer which binds Holliday junction (HJ) DNA. The HJ becomes 2-fold symmetrical on binding to RuvC with unstacked arms; it has a different conformation from HJ DNA in complex with RuvA. In the full resolvosome a probable DNA-RuvA(4)-RuvB(12)-RuvC(2) complex forms which resolves the HJ. Mg(2+) serves as cofactor.

The protein resides in the cytoplasm. It catalyses the reaction Endonucleolytic cleavage at a junction such as a reciprocal single-stranded crossover between two homologous DNA duplexes (Holliday junction).. Functionally, the RuvA-RuvB-RuvC complex processes Holliday junction (HJ) DNA during genetic recombination and DNA repair. Endonuclease that resolves HJ intermediates. Cleaves cruciform DNA by making single-stranded nicks across the HJ at symmetrical positions within the homologous arms, yielding a 5'-phosphate and a 3'-hydroxyl group; requires a central core of homology in the junction. The consensus cleavage sequence is 5'-(A/T)TT(C/G)-3'. Cleavage occurs on the 3'-side of the TT dinucleotide at the point of strand exchange. HJ branch migration catalyzed by RuvA-RuvB allows RuvC to scan DNA until it finds its consensus sequence, where it cleaves and resolves the cruciform DNA. This chain is Crossover junction endodeoxyribonuclease RuvC, found in Serratia proteamaculans (strain 568).